A 398-amino-acid chain; its full sequence is Phospholipase C (398 aa).

A signal peptide spans 1–26; that stretch reads MKALKKVSNILCVLGLCTLMGGTSYA. Zn(2+)-binding residues include tryptophan 27, histidine 37, aspartate 82, histidine 94, histidine 152, aspartate 156, histidine 162, histidine 174, and glutamate 178. The Zn-dependent PLC domain maps to 27–276; it reads WDGKKDGTGT…NEVSNGNTGD (250 aa). Residues 273–281 are linker; it reads NTGDNDSLT. Residues 282–398 enclose the PLAT domain; it reads NEFNIVLKTA…TGNETYYINK (117 aa). Glycine 297, threonine 298, aspartate 299, aspartate 319, asparagine 320, glycine 322, asparagine 323, aspartate 324, and aspartate 363 together coordinate Ca(2+).

The protein belongs to the bacterial zinc-metallophospholipase C family. Requires Ca(2+) as cofactor. It depends on Zn(2+) as a cofactor.

It localises to the secreted. The catalysed reaction is a 1,2-diacyl-sn-glycero-3-phosphocholine + H2O = phosphocholine + a 1,2-diacyl-sn-glycerol + H(+). In terms of biological role, bacterial hemolysins are exotoxins that attack blood cell membranes and cause cell rupture. Binds to eukaryotic membranes where it hydrolyzes phosphatidylcholine. This enzyme has 10-fold less activity towards sphingomyelin than its C.perfringens counterpart, is approximately 100-fold less hemolytic against mouse erythrocytes and at least 100-fold less toxic in mice. The polypeptide is Phospholipase C (plc) (Paraclostridium bifermentans (Clostridium bifermentans)).